The chain runs to 212 residues: F420-dependent NADP reductase (212 aa).

NADP(+)-binding positions include 9–12 (TGNL), 31–32 (SR), K36, I72, H76, V98, and A137. L207 contacts coenzyme F420-(gamma-Glu)n.

This sequence belongs to the F420-dependent NADP reductase family. Homodimer.

The catalysed reaction is reduced coenzyme F420-(gamma-L-Glu)(n) + NADP(+) = oxidized coenzyme F420-(gamma-L-Glu)(n) + NADPH + 2 H(+). Catalyzes the reversible reduction of NADP(+) by F420H(2). In this reaction the proS hydrogen at C5 of F420 is transferred into the proS position at C4 of NADPH. In Archaeoglobus fulgidus (strain ATCC 49558 / DSM 4304 / JCM 9628 / NBRC 100126 / VC-16), this protein is F420-dependent NADP reductase (fno).